Reading from the N-terminus, the 1479-residue chain is Chromosome partition protein MukB (1479 aa).

Residue Gly34 to Ser41 coordinates ATP. Coiled coils occupy residues Glu138–Val163 and Gln331–Gln664. Residues Pro665–Arg782 form a flexible hinge region. 2 coiled-coil regions span residues Asp831–Ala1112 and Val1206–Gln1257.

It belongs to the SMC family. MukB subfamily. As to quaternary structure, homodimerization via its hinge domain. Binds to DNA via its C-terminal region. Interacts, and probably forms a ternary complex, with MukE and MukF via its C-terminal region. The complex formation is stimulated by calcium or magnesium. Interacts with tubulin-related protein FtsZ.

The protein localises to the cytoplasm. It is found in the nucleoid. Plays a central role in chromosome condensation, segregation and cell cycle progression. Functions as a homodimer, which is essential for chromosome partition. Involved in negative DNA supercoiling in vivo, and by this means organize and compact chromosomes. May achieve or facilitate chromosome segregation by condensation DNA from both sides of a centrally located replisome during cell division. This is Chromosome partition protein MukB from Klebsiella pneumoniae.